A 556-amino-acid chain; its full sequence is MNSILAIKNIIIESLSQAMEKARQEGQIPALSVDISIEHPQKTNYGDYATSLPLRLAKATGKRPMELAQILASYIETGSGISKVSVAPPGFINFTFSKEWLCSLVKTILTEAGSYGNINMGGGSRVQIEFVSANPTGPIHIGHGRGAVLGSTLSNILKAAGYYVEEEFYINDAGSQIDAFKRTLFARYQQALGKDAAVPQDGYHGQYMVDLAAEMVTKYGDKYLQMPADIAQNDLGEIGMARMLCLISDDLKALKVDFDIWFSERSLYSGGQYKTAMDILSGNNYIAERDNATWFSSTLLGDSKDNVIVRSDGTPTYFASDIAYHYNKFIERKFDRVINIWGADHQGHVSRMKAMVSALGINPERLTTLLFQMITLKRGGELVRLSKRTGEIISLREVIEEVGADACRFFFLARSTESQMDFDLELAKKESAENPVYYVQYAHARICSILHLAAEKQLDYSTGDTDLLGEEAELELIRKMAELPEIVETVSRTLEPHHLTYYAQELANAFHQFYKDCRVISDNAELTCARLKLVDASRIVLARTLHLMGMTSPESM.

The short motif at Ala-133–His-143 is the 'HIGH' region element.

The protein belongs to the class-I aminoacyl-tRNA synthetase family. Monomer.

The protein resides in the cytoplasm. It catalyses the reaction tRNA(Arg) + L-arginine + ATP = L-arginyl-tRNA(Arg) + AMP + diphosphate. The protein is Arginine--tRNA ligase of Dehalococcoides mccartyi (strain CBDB1).